The following is a 260-amino-acid chain: MALRRPMVAGNWKMNGSAQLAQELFNKFATKLQDDSVEVVLCPPSIYLESVRQLLDENKETLNGCLVRMGTQNLSQHDFGAYTGEISGQMLKDSGCRYVIIGHSERRRMYGETSNIVAEKFAAAQKHGLTPILCVGESGPAREARRTFEVIAEELDVVIEKNGTMAFDNAIIAYEPLWAVGTGKSATPEQAQEVHAFIRKRLSEVSPFIGENIRILYGGSVTPSNAADLFAQPDVDGGLIGGVSLNATEFLSLCTIAMSA.

Residue 11–13 (NWK) participates in substrate binding. Histidine 103 functions as the Electrophile in the catalytic mechanism. Glutamate 175 acts as the Proton acceptor in catalysis. Residues glycine 181, serine 220, and 241-242 (GG) each bind substrate.

Belongs to the triosephosphate isomerase family. Homodimer.

The protein localises to the cytoplasm. The catalysed reaction is D-glyceraldehyde 3-phosphate = dihydroxyacetone phosphate. It functions in the pathway carbohydrate biosynthesis; gluconeogenesis. The protein operates within carbohydrate degradation; glycolysis; D-glyceraldehyde 3-phosphate from glycerone phosphate: step 1/1. Involved in the gluconeogenesis. Catalyzes stereospecifically the conversion of dihydroxyacetone phosphate (DHAP) to D-glyceraldehyde-3-phosphate (G3P). This chain is Triosephosphate isomerase, found in Shewanella pealeana (strain ATCC 700345 / ANG-SQ1).